The primary structure comprises 156 residues: Small ribosomal subunit protein uS7 (156 aa).

Belongs to the universal ribosomal protein uS7 family. In terms of assembly, part of the 30S ribosomal subunit. Contacts proteins S9 and S11.

One of the primary rRNA binding proteins, it binds directly to 16S rRNA where it nucleates assembly of the head domain of the 30S subunit. Is located at the subunit interface close to the decoding center, probably blocks exit of the E-site tRNA. The sequence is that of Small ribosomal subunit protein uS7 from Aster yellows witches'-broom phytoplasma (strain AYWB).